Consider the following 437-residue polypeptide: Adenylosuccinate lyase (437 aa).

N(6)-(1,2-dicarboxyethyl)-AMP is bound by residues 4 to 5 (RY), 70 to 72 (KHD), and 96 to 97 (TS). Catalysis depends on histidine 144, which acts as the Proton donor/acceptor. Glutamine 215 lines the N(6)-(1,2-dicarboxyethyl)-AMP pocket. The active-site Proton donor/acceptor is serine 265. Residues serine 266, 271 to 273 (KKN), and 310 to 314 (SVERV) each bind N(6)-(1,2-dicarboxyethyl)-AMP.

Belongs to the lyase 1 family. Adenylosuccinate lyase subfamily. In terms of assembly, homooligomer. Residues from neighboring subunits contribute catalytic and substrate-binding residues to each active site.

The enzyme catalyses N(6)-(1,2-dicarboxyethyl)-AMP = fumarate + AMP. It carries out the reaction (2S)-2-[5-amino-1-(5-phospho-beta-D-ribosyl)imidazole-4-carboxamido]succinate = 5-amino-1-(5-phospho-beta-D-ribosyl)imidazole-4-carboxamide + fumarate. It participates in purine metabolism; AMP biosynthesis via de novo pathway; AMP from IMP: step 2/2. It functions in the pathway purine metabolism; IMP biosynthesis via de novo pathway; 5-amino-1-(5-phospho-D-ribosyl)imidazole-4-carboxamide from 5-amino-1-(5-phospho-D-ribosyl)imidazole-4-carboxylate: step 2/2. Its function is as follows. Catalyzes two reactions in de novo purine nucleotide biosynthesis. Catalyzes the breakdown of 5-aminoimidazole- (N-succinylocarboxamide) ribotide (SAICAR or 2-[5-amino-1-(5-phospho-beta-D-ribosyl)imidazole-4-carboxamido]succinate) to 5-aminoimidazole-4-carboxamide ribotide (AICAR or 5-amino-1-(5-phospho-beta-D-ribosyl)imidazole-4-carboxamide) and fumarate, and of adenylosuccinate (ADS or N(6)-(1,2-dicarboxyethyl)-AMP) to adenosine monophosphate (AMP) and fumarate. The sequence is that of Adenylosuccinate lyase (purB) from Aquifex aeolicus (strain VF5).